We begin with the raw amino-acid sequence, 258 residues long: tRNA pseudouridine synthase A (258 aa).

D53 serves as the catalytic Nucleophile. Y111 lines the substrate pocket.

It belongs to the tRNA pseudouridine synthase TruA family. As to quaternary structure, homodimer.

It catalyses the reaction uridine(38/39/40) in tRNA = pseudouridine(38/39/40) in tRNA. Its function is as follows. Formation of pseudouridine at positions 38, 39 and 40 in the anticodon stem and loop of transfer RNAs. The polypeptide is tRNA pseudouridine synthase A (Streptococcus agalactiae serotype Ia (strain ATCC 27591 / A909 / CDC SS700)).